The primary structure comprises 71 residues: IRCFITPDITSKDCPNGHVCYTKTWCDAFCSIRGKRVDLGCAATCPTVKTGVDIQCCSTDDCDPFPTRKRP.

5 disulfides stabilise this stretch: Cys3–Cys20, Cys14–Cys41, Cys26–Cys30, Cys45–Cys56, and Cys57–Cys62.

The protein belongs to the three-finger toxin family. Long-chain subfamily. Type II alpha-neurotoxin sub-subfamily. As to expression, expressed by the venom gland.

The protein localises to the secreted. Functionally, binds with high affinity to muscular (alpha-1/CHRNA1) and neuronal (alpha-7/CHRNA7) nicotinic acetylcholine receptor (nAChR) and inhibits acetylcholine from binding to the receptor, thereby impairing neuromuscular and neuronal transmission. The chain is Long neurotoxin 3 from Naja naja (Indian cobra).